The primary structure comprises 312 residues: tRNA-cytidine(32) 2-sulfurtransferase (312 aa).

Residues 48–53 carry the PP-loop motif motif; that stretch reads SGGKDS. Positions 123, 126, and 214 each coordinate [4Fe-4S] cluster.

The protein belongs to the TtcA family. In terms of assembly, homodimer. It depends on Mg(2+) as a cofactor. Requires [4Fe-4S] cluster as cofactor.

It localises to the cytoplasm. It carries out the reaction cytidine(32) in tRNA + S-sulfanyl-L-cysteinyl-[cysteine desulfurase] + AH2 + ATP = 2-thiocytidine(32) in tRNA + L-cysteinyl-[cysteine desulfurase] + A + AMP + diphosphate + H(+). Its pathway is tRNA modification. Catalyzes the ATP-dependent 2-thiolation of cytidine in position 32 of tRNA, to form 2-thiocytidine (s(2)C32). The sulfur atoms are provided by the cysteine/cysteine desulfurase (IscS) system. The chain is tRNA-cytidine(32) 2-sulfurtransferase from Mannheimia succiniciproducens (strain KCTC 0769BP / MBEL55E).